The sequence spans 453 residues: Tubulin alpha chain (453 aa).

Glutamine 11 provides a ligand contact to GTP. Lysine 40 carries the N6-acetyllysine modification. GTP-binding residues include glutamate 71, glycine 144, threonine 145, threonine 179, asparagine 206, and asparagine 228. Glutamate 71 lines the Mg(2+) pocket. Glutamate 254 is a catalytic residue.

It belongs to the tubulin family. As to quaternary structure, dimer of alpha and beta chains. A typical microtubule is a hollow water-filled tube with an outer diameter of 25 nm and an inner diameter of 15 nM. Alpha-beta heterodimers associate head-to-tail to form protofilaments running lengthwise along the microtubule wall with the beta-tubulin subunit facing the microtubule plus end conferring a structural polarity. Microtubules usually have 13 protofilaments but different protofilament numbers can be found in some organisms and specialized cells. The cofactor is Mg(2+). Undergoes a tyrosination/detyrosination cycle, the cyclic removal and re-addition of a C-terminal tyrosine residue by the enzymes tubulin tyrosine carboxypeptidase (TTCP) and tubulin tyrosine ligase (TTL), respectively. In terms of processing, acetylation of alpha chains at Lys-40 stabilizes microtubules and affects affinity and processivity of microtubule motors. This modification has a role in multiple cellular functions, ranging from cell motility, cell cycle progression or cell differentiation to intracellular trafficking and signaling.

It is found in the cytoplasm. It localises to the cytoskeleton. It carries out the reaction GTP + H2O = GDP + phosphate + H(+). Tubulin is the major constituent of microtubules, a cylinder consisting of laterally associated linear protofilaments composed of alpha- and beta-tubulin heterodimers. Microtubules grow by the addition of GTP-tubulin dimers to the microtubule end, where a stabilizing cap forms. Below the cap, tubulin dimers are in GDP-bound state, owing to GTPase activity of alpha-tubulin. The polypeptide is Tubulin alpha chain (Plasmodium falciparum (isolate K1 / Thailand)).